A 358-amino-acid chain; its full sequence is Neutral protease 2 homolog MGYG_02351 (358 aa).

Positions 1–17 (MQFVALLAALGAPLALA) are cleaved as a signal peptide. Residues 18 to 183 (ASIPAAHNNS…DSPAGVIDKR (166 aa)) constitute a propeptide that is removed on maturation. 2 disulfide bridges follow: Cys-191-Cys-260 and Cys-267-Cys-285. Position 309 (His-309) interacts with Zn(2+). The active site involves Glu-310. His-313 and Asp-324 together coordinate Zn(2+).

Belongs to the peptidase M35 family. Requires Zn(2+) as cofactor.

It localises to the secreted. It carries out the reaction Preferential cleavage of bonds with hydrophobic residues in P1'. Also 3-Asn-|-Gln-4 and 8-Gly-|-Ser-9 bonds in insulin B chain.. Its function is as follows. Secreted metalloproteinase that allows assimilation of proteinaceous substrates. Shows high activities on basic nuclear substrates such as histone and protamine. May be involved in virulence. The sequence is that of Neutral protease 2 homolog MGYG_02351 from Arthroderma gypseum (strain ATCC MYA-4604 / CBS 118893) (Microsporum gypseum).